A 203-amino-acid chain; its full sequence is Transmembrane protein 269 (203 aa).

3 helical membrane-spanning segments follow: residues 60–80 (GLAS…LAII), 124–144 (FILC…SYYP), and 157–177 (LVYI…SAFY).

It is found in the membrane. The chain is Transmembrane protein 269 from Homo sapiens (Human).